The primary structure comprises 221 residues: Urease accessory protein UreF (221 aa).

It belongs to the UreF family. UreD, UreF and UreG form a complex that acts as a GTP-hydrolysis-dependent molecular chaperone, activating the urease apoprotein by helping to assemble the nickel containing metallocenter of UreC. The UreE protein probably delivers the nickel.

The protein resides in the cytoplasm. Its function is as follows. Required for maturation of urease via the functional incorporation of the urease nickel metallocenter. In Aliivibrio fischeri (strain ATCC 700601 / ES114) (Vibrio fischeri), this protein is Urease accessory protein UreF.